A 260-amino-acid polypeptide reads, in one-letter code: 5-oxoprolinase subunit A 2 (260 aa).

This sequence belongs to the LamB/PxpA family. As to quaternary structure, forms a complex composed of PxpA, PxpB and PxpC.

It catalyses the reaction 5-oxo-L-proline + ATP + 2 H2O = L-glutamate + ADP + phosphate + H(+). Functionally, catalyzes the cleavage of 5-oxoproline to form L-glutamate coupled to the hydrolysis of ATP to ADP and inorganic phosphate. The protein is 5-oxoprolinase subunit A 2 of Ralstonia nicotianae (strain ATCC BAA-1114 / GMI1000) (Ralstonia solanacearum).